Reading from the N-terminus, the 1413-residue chain is Sushi, nidogen and EGF-like domain-containing protein 1 (1413 aa).

Positions 1–24 (MRHGVAWALLVAAALGLGARGVRG) are cleaved as a signal peptide. The 156-residue stretch at 103–258 (AFWADVDNRR…GRWAFRIDDA (156 aa)) folds into the NIDO domain. 2 N-linked (GlcNAc...) asparagine glycosylation sites follow: Asn145 and Asn204. EGF-like domains follow at residues 268 to 309 (TTSV…RRCH), 311 to 347 (DVNE…PTCE), and 349 to 385 (AQSP…AACE). Intrachain disulfides connect Cys272/Cys284, Cys278/Cys297, Cys299/Cys308, Cys315/Cys326, Cys320/Cys335, Cys337/Cys346, Cys353/Cys364, Cys358/Cys373, Cys375/Cys384, Cys391/Cys402, Cys396/Cys411, Cys413/Cys422, Cys433/Cys444, Cys438/Cys453, Cys455/Cys464, Cys472/Cys480, Cys474/Cys488, and Cys490/Cys499. Residue Asn292 is glycosylated (N-linked (GlcNAc...) asparagine). Positions 352–374 (PCDTKECQHGGQCQVENGSAVCV) constitute a Follistatin-like 1 domain. An N-linked (GlcNAc...) asparagine glycan is attached at Asn368. Residues 387 to 423 (DVDDCSPDPCLNGGSCVDLVGNYTCLCAEPFKGLRCE) enclose the EGF-like 4; calcium-binding domain. N-linked (GlcNAc...) asparagine glycosylation occurs at Asn408. EGF-like domains lie at 429–465 (VPDA…LDCR) and 468–500 (VPDD…LLCE). The N-linked (GlcNAc...) asparagine glycan is linked to Asn484. The Follistatin-like 2 domain maps to 507 to 530 (PCNMNTQCPDGGYCMEHGGSYLCV). Asn536 is a glycosylation site (N-linked (GlcNAc...) asparagine). 4 EGF-like domains span residues 541–577 (LPSP…KHCE), 580–616 (RPHL…RHCE), 619–655 (KPDS…RHCE), and 657–693 (APSP…RRCQ). 26 disulfide bridges follow: Cys545–Cys556, Cys550–Cys565, Cys567–Cys576, Cys584–Cys595, Cys589–Cys604, Cys606–Cys615, Cys623–Cys634, Cys628–Cys643, Cys645–Cys654, Cys661–Cys672, Cys666–Cys681, Cys683–Cys692, Cys698–Cys739, Cys724–Cys751, Cys757–Cys768, Cys762–Cys777, Cys779–Cys788, Cys795–Cys806, Cys800–Cys815, Cys817–Cys826, Cys833–Cys844, Cys838–Cys853, Cys855–Cys864, Cys871–Cys882, Cys876–Cys891, and Cys893–Cys902. A Sushi domain is found at 696 to 753 (VDCGPPEEVKHATLRFNGTRLGAVALYACDRGYSLSAPSRIRVCQPHGVWSEPPQCLE). Asn712 is a glycosylation site (N-linked (GlcNAc...) asparagine). One can recognise an EGF-like 11; calcium-binding domain in the interval 753–789 (EIDECRSQPCLHGGSCQDRVAGYLCLCSTGYEGAHCE). The 37-residue stretch at 791 to 827 (ERDECRAHPCRNGGSCRNLPGAYVCRCPAGFVGVHCE) folds into the EGF-like 12; calcium-binding domain. EGF-like domains lie at 829–865 (EVDA…YHCE) and 867–903 (VSDP…EDCA). Asn886 carries N-linked (GlcNAc...) asparagine glycosylation. 3 consecutive Fibronectin type-III domains span residues 908–1006 (PPTA…TRPR), 1007–1105 (PVEG…TRPL), and 1106–1200 (PPAN…SPRD). 4 N-linked (GlcNAc...) asparagine glycosylation sites follow: Asn977, Asn1015, Asn1109, and Asn1139. Residues 1206–1226 (WHQGGHHPRVLKNRPPPARLP) are disordered. Over residues 1207–1217 (HQGGHHPRVLK) the composition is skewed to basic residues. One can recognise an EGF-like 15 domain in the interval 1307 to 1343 (VPGNCSENPCQNGGTCVPGADAHSCDCGPGFKGRRCE). Asn1310 is a glycosylation site (N-linked (GlcNAc...) asparagine). 3 cysteine pairs are disulfide-bonded: Cys1311–Cys1322, Cys1316–Cys1331, and Cys1333–Cys1342. The segment at 1394-1413 (TSLKKTPNRKQSKSQTLEKS) is disordered.

Post-translationally, phosphorylated on serine and threonine residues. N-glycosylated.

Its subcellular location is the secreted. The protein localises to the extracellular space. It localises to the extracellular matrix. This Homo sapiens (Human) protein is Sushi, nidogen and EGF-like domain-containing protein 1.